The following is a 426-amino-acid chain: Glutamate-1-semialdehyde 2,1-aminomutase (426 aa).

N6-(pyridoxal phosphate)lysine is present on Lys-265.

This sequence belongs to the class-III pyridoxal-phosphate-dependent aminotransferase family. HemL subfamily. In terms of assembly, homodimer. Pyridoxal 5'-phosphate serves as cofactor.

Its subcellular location is the cytoplasm. The enzyme catalyses (S)-4-amino-5-oxopentanoate = 5-aminolevulinate. Its pathway is porphyrin-containing compound metabolism; protoporphyrin-IX biosynthesis; 5-aminolevulinate from L-glutamyl-tRNA(Glu): step 2/2. This is Glutamate-1-semialdehyde 2,1-aminomutase from Klebsiella pneumoniae (strain 342).